The primary structure comprises 624 residues: Glutaminase 2 (624 aa).

The segment at 1-20 is disordered; that stretch reads MDTQPIRLPSVAGATRSAGY. The glutaminase stretch occupies residues 43-325; sequence GELADYIPEL…LSARFDLHML (283 aa). Serine 85, asparagine 134, glutamate 178, asparagine 185, tyrosine 209, tyrosine 261, and valine 279 together coordinate substrate. In terms of domain architecture, STAS spans 355 to 466; it reads QQILDERHSD…ALLDDAIEWA (112 aa). Residue 491–608 coordinates a nucleoside 3',5'-cyclic phosphate; sequence LLAELDTDEI…IMRNLAAILA (118 aa).

It belongs to the glutaminase family. Homotetramer.

The enzyme catalyses L-glutamine + H2O = L-glutamate + NH4(+). The polypeptide is Glutaminase 2 (glsA2) (Bradyrhizobium diazoefficiens (strain JCM 10833 / BCRC 13528 / IAM 13628 / NBRC 14792 / USDA 110)).